The primary structure comprises 56 residues: Large ribosomal subunit protein bL32 (56 aa).

The segment covering 1–16 has biased composition (basic residues); sequence MAVQKSKKSRSMRGMR. The tract at residues 1 to 22 is disordered; the sequence is MAVQKSKKSRSMRGMRRSHDAL.

The protein belongs to the bacterial ribosomal protein bL32 family.

The polypeptide is Large ribosomal subunit protein bL32 (Aliivibrio salmonicida (strain LFI1238) (Vibrio salmonicida (strain LFI1238))).